We begin with the raw amino-acid sequence, 927 residues long: MVSVIDKLVFDFGGKTLVSLAPDNNTLCVANKNGLTKILKTNNPEEEPETLDSSKLVSSIKCYSNSHFLMTTMQGDALRYNIDSSQEELLARFALPLRDCCVIHSGKMAVFGGDDLELILLELDDETHKKHAIKIDEQVSQISYNSQMNILAVSMINGKVQIFSLTSTIPNKVHELNDYIVANSYDDTHRDKILSNMMDDIDKDNDNDLSETADPDENNVADPEFCAANRICTRVAWHPKGLHFALPCADDTVKIFSIKGYSLQKTLSTNLSSTKAHFIDLQFDPLRGTYIAAVDLNNKLTVWNWETSEIHYTREFKRKITNIAWKIQADSKTLDLVLGTWSGSIAIVQNLAESVVSNIPDQSVAESSTKHGLFVDSESDLENLEGNDDINKSDKLFSDITQEANAEDVFTQTHDGPSGLSEKRKYNFEDEEDFIDDDDGAGYISGKKPHNEHSYSRVHKTHSFPISLANTGKFRYMPFSPAGTPFGFTDRRYLTMNEVGYVSTVKNSEQYSITVSFFDVGRFREYHFEDLFGYDLCFLNEKGTLFGQSKTGQIQYRPHDSIHSNWTKIIPLQAGERITSVAATPVRVIVGTSLGYFRSFNQFGVPFAVEKTSPIVALTAQNYRVFSVHYSQFHGLSYSLSELGTSSKRYYKRECPLPMSLPNINSDMKKDANLDYYNFNPMGIKSLFFSSYGDPCIFGSDNTLLLLSKWRSPEESKWLPILDSNMEIWKMSGGKETTDIHVWPLALAYDTLNCILVKGKHIWPEFPLPLPSEMEIRMPVFVKSKLLEENKAILNKKNEIGADTEAEEGEEDKEIQIPVSMAAEEEYLRSKVLSELLTDTLENDGEMYGNENEVLAALNGAYDKALLRLFASACSDQNVEKALSLAHELKQDRALTAAVKISERAELPSLVKKINNIREARYEQQLK.

WD repeat units lie at residues 10–49 (FDFG…EEPE), 134–173 (KIDE…PNKV), 227–266 (AANR…LQKT), and 273–313 (STKA…IHYT). Phosphoserine occurs at positions 377, 379, and 398. Residues threonine 401 and threonine 411 each carry the phosphothreonine modification. Serine 463 carries the phosphoserine modification. The WD 5 repeat unit spans residues 699–739 (GSDNTLLLLSKWRSPEESKWLPILDSNMEIWKMSGGKETTD).

It localises to the nucleus. In terms of biological role, accessory factor for DNA replication. It plays a role in accurately duplicating the genome in vivo. The protein is DNA polymerase alpha-binding protein (CTF4) of Saccharomyces cerevisiae (strain ATCC 204508 / S288c) (Baker's yeast).